A 1134-amino-acid chain; its full sequence is DENN domain-containing protein 2B (1134 aa).

The span at 1–13 shows a compositional bias: polar residues; sequence MTMTANKNSSITH. The interval 1 to 90 is disordered; the sequence is MTMTANKNSS…DPSPETSPPI (90 aa). A phosphoserine mark is found at Ser30 and Ser32. Pro residues predominate over residues 32–43; it reads SPPPVLYPPRSP. Thr228 is subject to Phosphothreonine. Ser230 carries the post-translational modification Phosphoserine. Disordered regions lie at residues 233–273 and 289–571; these read SYPE…GIRK and LKEQ…KRHS. Basic and acidic residues predominate over residues 249-259; it reads SLYRLEKRPGR. Residues 315–348 are compositionally biased toward low complexity; sequence GTLGTLEEPTGTASVSPSSRAGGVAGVAGEAGPP. A Phosphothreonine modification is found at Thr361. Ser365 carries the post-translational modification Phosphoserine. Residues 370-385 show a composition bias toward pro residues; sequence LLPPKSSPDPAVNPVP. Residues 389 to 399 show a composition bias toward basic and acidic residues; sequence RTFEYEADKNP. Positions 406–428 are enriched in pro residues; it reads GLPPSPTPAAPPPLPSTPAPPVT. Over residues 429–443 the composition is skewed to basic residues; the sequence is RRPKKDMRGHRKSQN. The segment covering 453 to 478 has biased composition (polar residues); the sequence is SSLQSLYPSSPTENGTESQPKFGSKS. Position 479 is a phosphothreonine (Thr479). Composition is skewed to polar residues over residues 511–521 and 542–555; these read KSQQLSENSLD and SLKSNSQSLRSGNW. Ser542 is modified (phosphoserine). Residues 559 to 570 are compositionally biased toward basic residues; sequence KSHRLPRLPKRH. Ser571 and Ser619 each carry phosphoserine. Residues 633 to 658 form a disordered region; that stretch reads LSMSSLETASLRDENSESESDSDDRF. In terms of domain architecture, uDENN spans 695-843; sequence EYFVVVSLKK…PFPAPGKTIK (149 aa). A cDENN domain is found at 865–998; that stretch reads RLEHVDFECL…LQAALEQALE (134 aa). The dDENN domain occupies 1000–1093; sequence KSELISQDSD…QDRELRKCRA (94 aa).

In terms of assembly, interacts with ITSN1 and GRB2. Isoform 1 interacts with the SH3 domain of ABL1. In terms of processing, phosphorylated. Phosphorylation decreases ITSN1 binding.

The protein localises to the cytoplasm. The protein resides in the cell cortex. It localises to the cell membrane. Its subcellular location is the recycling endosome. Functionally, may be involved in cytoskeletal organization and tumorogenicity. Seems to be involved in a signaling transduction pathway leading to activation of MAPK1/ERK2. Plays a role in EGFR trafficking from recycling endosomes back to the cell membrane. In terms of biological role, guanine nucleotide exchange factor (GEF) which may activate RAB9A and RAB9B. Promotes the exchange of GDP to GTP, converting inactive GDP-bound Rab proteins into their active GTP-bound form. May block ERK2 activation stimulated by ABL1. May alter cell morphology and cell growth. This chain is DENN domain-containing protein 2B (Dennd2b), found in Mus musculus (Mouse).